A 253-amino-acid chain; its full sequence is MPNYALADLLEKTKIEQILQLAEINAELEALSAQERVRWALANLGSEFALASSFGIQSAVMLHLVTNESPKVPVILTDTGYLFPETYQFIDQLTLRLSLNLYVYRAEISSAWQEARHGKLWEQGVDGIKQYNRLNKVEPMRRALDELNVSAWFSGLRREQSSSRASLPVLAIQNGVFKFLPLIDWTDNDIEQYLNQYDLPYHPLRDEGYLSMGDTHTTKKWEPGMTEEETRFFGLKRECGLHEEDAESDGSGI.

The Nucleophile; cysteine thiosulfonate intermediate role is filled by C239.

This sequence belongs to the PAPS reductase family. CysH subfamily.

Its subcellular location is the cytoplasm. It carries out the reaction [thioredoxin]-disulfide + sulfite + adenosine 3',5'-bisphosphate + 2 H(+) = [thioredoxin]-dithiol + 3'-phosphoadenylyl sulfate. It participates in sulfur metabolism; hydrogen sulfide biosynthesis; sulfite from sulfate: step 3/3. Functionally, catalyzes the formation of sulfite from phosphoadenosine 5'-phosphosulfate (PAPS) using thioredoxin as an electron donor. In Photobacterium profundum (strain SS9), this protein is Phosphoadenosine 5'-phosphosulfate reductase.